We begin with the raw amino-acid sequence, 1124 residues long: EGF and laminin G domain-containing protein (1124 aa).

Over 1 to 1055 (RTFVKKYSAS…KLQAEDDDKT (1055 aa)) the chain is Extracellular. 2 Laminin G-like domains span residues 8 to 203 (SASR…NQKC) and 210 to 369 (PFTF…WSGC). 9 cysteine pairs are disulfide-bonded: C167/C203, C342/C369, C375/C386, C380/C395, C397/C412, C761/C788, C792/C803, C797/C812, and C814/C824. Residues 371–413 (ITDFCIFSPCLHGGECTQTGKTFSCGCSGTGYDKGPNSLSVCQ) enclose the EGF-like 1 domain. Positions 621 to 788 (NTATFVNEDG…GEAVFVKSGC (168 aa)) constitute a Laminin G-like 3 domain. The EGF-like 2 domain maps to 789–825 (GAACENNSCKNHAKCLDNYNVYFCDCSKTPYYGYFCH). The disordered stretch occupies residues 1011–1047 (RATCGPEPKVPEIPTPRPVGQRADVSTPQGITTNPKL). The span at 1034-1046 (DVSTPQGITTNPK) shows a compositional bias: polar residues. Residues 1056–1076 (AIIVVVVLILVLLLVVLILVI) form a helical membrane-spanning segment. The Cytoplasmic segment spans residues 1077 to 1124 (YWYWARHKGEYHTHEDDEELKATDPYIEPAAPRKLKGEEPEKKKEWYI). Positions 1090–1124 (HEDDEELKATDPYIEPAAPRKLKGEEPEKKKEWYI) are disordered. Residues 1111–1124 (LKGEEPEKKKEWYI) are compositionally biased toward basic and acidic residues.

As to expression, component of the acid-insoluble organic matrix of the aragonitic skeleton (at protein level).

It localises to the membrane. This is EGF and laminin G domain-containing protein from Acropora millepora (Staghorn coral).